Reading from the N-terminus, the 32-residue chain is Tail virion protein G9P (32 aa).

The helical transmembrane segment at 4–24 threads the bilayer; that stretch reads LSYFFAAYCIGWVISHSILVF.

It belongs to the inovirus G9P protein family.

Its subcellular location is the virion. It is found in the host membrane. Functionally, may initiate with G7P the virion concomitant assembly-budding process, by interacting with the packaging signal of the viral genome. The assembly-budding takes place at the host inner membrane. In turn, G7P and G9P are present at the end of the filamentous virion that emerges first from the bacterial host. The protein is Tail virion protein G9P (IX) of Escherichia phage If1 (Bacteriophage If1).